The chain runs to 360 residues: MSKFLPEELAIEILVRLSMKDLARFRCVCKTWRDLINDPGFTETYRDMSPAKFVSFYDKNFYMLDVEGKHPVITNKLDFPLDQSMIDESTCVLHCDGTLCVTLKNHTLMVWNPFSKQFKIVPNPGIYQDSNILGFGYDPVHDDYKVVTFIDRLDVSTAHVFEFRTGSWGESLRISYPDWHYRDRRGTFLDQYLYWIAYRSSADRFILCFNLSTHEYRKLPLPVYNQGVTSSWLGVTSQKLCITEYEMCKKEIRISVMEKTGSWSKIISLSMSSFISVQDRIYDYQVEFVSFTRKNDLVVTFTGYNDHFEMEPEERTKKKMFLYKTGNERSEEVRFCNPLAGLRFLCECVETLKIVNRIFI.

An F-box domain is found at 1–48 (MSKFLPEELAIEILVRLSMKDLARFRCVCKTWRDLINDPGFTETYRDM).

The chain is Putative F-box protein At3g16210 from Arabidopsis thaliana (Mouse-ear cress).